Here is a 231-residue protein sequence, read N- to C-terminus: Probable pyridoxamine 5'-phosphate oxidase (231 aa).

Pyridoxal 5'-phosphate is bound at residue Gln20–Lys23. Arg74–Leu77 serves as a coordination point for FMN. Lys79 provides a ligand contact to pyridoxal 5'-phosphate. FMN is bound by residues Phe89–Thr90, Lys96–Lys97, and Gln119. Pyridoxal 5'-phosphate is bound by residues Tyr137, Arg141, and Ser145. FMN-binding positions include Gln154 to Ser155 and Trp202. Position 208-210 (Arg208–His210) interacts with pyridoxal 5'-phosphate. Arg212 contributes to the FMN binding site.

Belongs to the pyridoxamine 5'-phosphate oxidase family. Homodimer. FMN is required as a cofactor.

The catalysed reaction is pyridoxamine 5'-phosphate + O2 + H2O = pyridoxal 5'-phosphate + H2O2 + NH4(+). The enzyme catalyses pyridoxine 5'-phosphate + O2 = pyridoxal 5'-phosphate + H2O2. It functions in the pathway cofactor metabolism; pyridoxal 5'-phosphate salvage; pyridoxal 5'-phosphate from pyridoxamine 5'-phosphate: step 1/1. The protein operates within cofactor metabolism; pyridoxal 5'-phosphate salvage; pyridoxal 5'-phosphate from pyridoxine 5'-phosphate: step 1/1. Catalyzes the oxidation of either pyridoxine 5'-phosphate (PNP) or pyridoxamine 5'-phosphate (PMP) into pyridoxal 5'-phosphate (PLP). The sequence is that of Probable pyridoxamine 5'-phosphate oxidase from Schizosaccharomyces pombe (strain 972 / ATCC 24843) (Fission yeast).